Reading from the N-terminus, the 418-residue chain is Glutamyl-tRNA reductase (418 aa).

Residues 49-52 (TCNR), S108, 113-115 (EPQ), and Q119 contribute to the substrate site. Catalysis depends on C50, which acts as the Nucleophile. 188-193 (GAGETI) contacts NADP(+).

Belongs to the glutamyl-tRNA reductase family. As to quaternary structure, homodimer.

The enzyme catalyses (S)-4-amino-5-oxopentanoate + tRNA(Glu) + NADP(+) = L-glutamyl-tRNA(Glu) + NADPH + H(+). It participates in porphyrin-containing compound metabolism; protoporphyrin-IX biosynthesis; 5-aminolevulinate from L-glutamyl-tRNA(Glu): step 1/2. Functionally, catalyzes the NADPH-dependent reduction of glutamyl-tRNA(Glu) to glutamate 1-semialdehyde (GSA). This chain is Glutamyl-tRNA reductase, found in Aliivibrio fischeri (strain ATCC 700601 / ES114) (Vibrio fischeri).